A 349-amino-acid chain; its full sequence is Heat-inducible transcription repressor HrcA (349 aa).

Belongs to the HrcA family.

Its function is as follows. Negative regulator of class I heat shock genes (grpE-dnaK-dnaJ and groELS operons). Prevents heat-shock induction of these operons. In Mycoplasmoides gallisepticum (strain R(low / passage 15 / clone 2)) (Mycoplasma gallisepticum), this protein is Heat-inducible transcription repressor HrcA.